Reading from the N-terminus, the 87-residue chain is U3-theraphotoxin-Hhn1o (87 aa).

A signal peptide spans 1 to 24 (MVNMKASMFLTFAGLVLLFVVCYA). The propeptide occupies 25–52 (SESEEKEFPKEMLSSIFAVDNDFKQEER). Intrachain disulfides connect cysteine 54-cysteine 67 and cysteine 61-cysteine 72.

Belongs to the neurotoxin 10 (Hwtx-1) family. 51 (Hntx-8) subfamily. Hntx-8 sub-subfamily. In terms of tissue distribution, expressed by the venom gland.

The protein localises to the secreted. Ion channel inhibitor. The chain is U3-theraphotoxin-Hhn1o from Cyriopagopus hainanus (Chinese bird spider).